The primary structure comprises 603 residues: Granule-bound starch synthase 1, chloroplastic/amyloplastic (603 aa).

The transit peptide at Met-1–Cys-75 directs the protein to the chloroplast. Position 91 (Lys-91) interacts with ADP-alpha-D-glucose.

Belongs to the glycosyltransferase 1 family. Bacterial/plant glycogen synthase subfamily. Expressed in pods and leaves. No expression in flowers or stipules.

The protein localises to the plastid. It localises to the chloroplast. It is found in the amyloplast. The enzyme catalyses an NDP-alpha-D-glucose + [(1-&gt;4)-alpha-D-glucosyl](n) = [(1-&gt;4)-alpha-D-glucosyl](n+1) + a ribonucleoside 5'-diphosphate + H(+). The protein operates within glycan biosynthesis; starch biosynthesis. Functionally, may be responsible for the synthesis of amylose. In Pisum sativum (Garden pea), this protein is Granule-bound starch synthase 1, chloroplastic/amyloplastic.